The primary structure comprises 771 residues: Solute carrier family 7 member 14 (771 aa).

6 helical membrane-spanning segments follow: residues L58 to V78, A83 to V103, A119 to L141, Y187 to V207, V216 to I236, and W251 to I271. N-linked (GlcNAc...) asparagine glycosylation occurs at N282. A run of 4 helical transmembrane segments spans residues A291–V311, F336–P356, P384–L404, and L407–L427. Phosphoserine occurs at positions 465, 468, 475, and 488. The next 4 helical transmembrane spans lie at V565–F585, W596–L616, M628–L648, and W655–W675. Residue N676 is glycosylated (N-linked (GlcNAc...) asparagine). A disordered region spans residues S735–E771. Basic residues predominate over residues S745–K754. Phosphoserine occurs at positions 757 and 769.

Belongs to the amino acid-polyamine-organocation (APC) superfamily. As to expression, expressed in retina, brain and spinal cord. In the retina, expressed in the inner nuclear layer and photoreceptor layer (at protein level). Expressed in liver, spleen, lung, kidney intestine and brain (at protein level).

It is found in the lysosome membrane. The enzyme catalyses 4-aminobutanoate(in) = 4-aminobutanoate(out). Its function is as follows. Imports 4-aminobutanoate (GABA) into lysosomes. May act as a GABA sensor that regulates mTORC2-dependent INS signaling and gluconeogenesis. The transport mechanism and substrate selectivity remain to be elucidated. This chain is Solute carrier family 7 member 14, found in Mus musculus (Mouse).